The sequence spans 443 residues: EP1-like glycoprotein 4 (443 aa).

Residues 1–22 (MEFSTTLALFFTLSIFLVGAQA) form the signal peptide. The Bulb-type lectin domain maps to 29–159 (QFRVVNEGGY…NGKFVWQSFD (131 aa)). N-linked (GlcNAc...) asparagine glycosylation is found at asparagine 66, asparagine 102, asparagine 258, and asparagine 269. Residues 254–296 (GSQFNVSTFLSRPKHNATLSFLRLESDGNIRVWSYSTLATSTA) form a WD repeat. The PAN domain occupies 356–433 (CDPKTFHYFK…TSLVAYVKAP (78 aa)). Intrachain disulfides connect cysteine 387-cysteine 409 and cysteine 391-cysteine 397. Residue asparagine 434 is glycosylated (N-linked (GlcNAc...) asparagine).

The protein localises to the secreted. It localises to the cell wall. This chain is EP1-like glycoprotein 4, found in Arabidopsis thaliana (Mouse-ear cress).